Reading from the N-terminus, the 113-residue chain is Nucleoid-associated protein P9303_00241 (113 aa).

Residues 90–113 are disordered; that stretch reads TTTMKEQMEELTGGLNLNLPGMSD.

It belongs to the YbaB/EbfC family. In terms of assembly, homodimer.

Its subcellular location is the cytoplasm. It is found in the nucleoid. Functionally, binds to DNA and alters its conformation. May be involved in regulation of gene expression, nucleoid organization and DNA protection. This is Nucleoid-associated protein P9303_00241 from Prochlorococcus marinus (strain MIT 9303).